A 450-amino-acid polypeptide reads, in one-letter code: Tubulin alpha-3 chain (450 aa).

GTP is bound by residues Gln-11, Glu-71, Gly-144, Thr-145, Thr-179, Asn-206, and Asn-228. Position 71 (Glu-71) interacts with Mg(2+). The active site involves Glu-254.

This sequence belongs to the tubulin family. In terms of assembly, dimer of alpha and beta chains. A typical microtubule is a hollow water-filled tube with an outer diameter of 25 nm and an inner diameter of 15 nM. Alpha-beta heterodimers associate head-to-tail to form protofilaments running lengthwise along the microtubule wall with the beta-tubulin subunit facing the microtubule plus end conferring a structural polarity. Microtubules usually have 13 protofilaments but different protofilament numbers can be found in some organisms and specialized cells. Requires Mg(2+) as cofactor. In terms of processing, undergoes a tyrosination/detyrosination cycle, the cyclic removal and re-addition of a C-terminal tyrosine residue by the enzymes tubulin tyrosine carboxypeptidase (TTCP) and tubulin tyrosine ligase (TTL), respectively.

It is found in the cytoplasm. The protein resides in the cytoskeleton. It carries out the reaction GTP + H2O = GDP + phosphate + H(+). In terms of biological role, tubulin is the major constituent of microtubules, a cylinder consisting of laterally associated linear protofilaments composed of alpha- and beta-tubulin heterodimers. Microtubules grow by the addition of GTP-tubulin dimers to the microtubule end, where a stabilizing cap forms. Below the cap, tubulin dimers are in GDP-bound state, owing to GTPase activity of alpha-tubulin. The chain is Tubulin alpha-3 chain (TUBA3) from Eleusine indica (Goosegrass).